The primary structure comprises 362 residues: Methionine import ATP-binding protein MetN (362 aa).

Residues 23-258 (VRLTDVKRRF…PQAEITGSLL (236 aa)) form the ABC transporter domain. 55–62 (GRSGAGKS) is a binding site for ATP.

The protein belongs to the ABC transporter superfamily. Methionine importer (TC 3.A.1.24) family. In terms of assembly, the complex is composed of two ATP-binding proteins (MetN), two transmembrane proteins (MetI) and a solute-binding protein (MetQ).

It localises to the cell inner membrane. The catalysed reaction is L-methionine(out) + ATP + H2O = L-methionine(in) + ADP + phosphate + H(+). It catalyses the reaction D-methionine(out) + ATP + H2O = D-methionine(in) + ADP + phosphate + H(+). In terms of biological role, part of the ABC transporter complex MetNIQ involved in methionine import. Responsible for energy coupling to the transport system. The polypeptide is Methionine import ATP-binding protein MetN (Rhizobium johnstonii (strain DSM 114642 / LMG 32736 / 3841) (Rhizobium leguminosarum bv. viciae)).